The chain runs to 214 residues: Large ribosomal subunit protein uL4c (214 aa).

The tract at residues 42 to 81 (VKQSNEKRQGSANTKTRSEVRGGGRKPWRQKGTGRARAGS) is disordered. Residues 64-75 (GGRKPWRQKGTG) are compositionally biased toward basic residues.

This sequence belongs to the universal ribosomal protein uL4 family. In terms of assembly, part of the 50S ribosomal subunit.

It is found in the plastid. The protein resides in the chloroplast. In terms of biological role, probably binds the 23S rRNA. In Pyropia yezoensis (Susabi-nori), this protein is Large ribosomal subunit protein uL4c (rpl4).